Consider the following 550-residue polypeptide: Copine-F (550 aa).

2 consecutive C2 domains span residues 1–115 (MAET…RLIG) and 123–246 (ITGK…PIIN). The 226-residue stretch at 296-521 (DLMVAIDCTE…DFQNEILRKL (226 aa)) folds into the VWFA domain.

Belongs to the copine family.

The polypeptide is Copine-F (cpnF) (Dictyostelium discoideum (Social amoeba)).